The chain runs to 142 residues: Hemoglobin subunit alpha-4 (142 aa).

One can recognise a Globin domain in the interval 2-142 (TLTDSDKAAI…VATVLTSKYR (141 aa)). His59 lines the O2 pocket. His88 contributes to the heme b binding site.

The protein belongs to the globin family. Heterotetramer of two alpha chains and two beta chains. Red blood cells.

This is a larval (tadpole) alpha-globin. This chain is Hemoglobin subunit alpha-4 (hba4), found in Xenopus laevis (African clawed frog).